A 366-amino-acid polypeptide reads, in one-letter code: tRNA-specific 2-thiouridylase MnmA (366 aa).

ATP is bound by residues 6 to 13 (AMSGGVDS) and L32. The active-site Nucleophile is C101. The cysteines at positions 101 and 199 are disulfide-linked. Position 125 (G125) interacts with ATP. Residues 149–151 (KDQ) form an interaction with tRNA region. C199 functions as the Cysteine persulfide intermediate in the catalytic mechanism.

It belongs to the MnmA/TRMU family.

It is found in the cytoplasm. It catalyses the reaction S-sulfanyl-L-cysteinyl-[protein] + uridine(34) in tRNA + AH2 + ATP = 2-thiouridine(34) in tRNA + L-cysteinyl-[protein] + A + AMP + diphosphate + H(+). Functionally, catalyzes the 2-thiolation of uridine at the wobble position (U34) of tRNA, leading to the formation of s(2)U34. This Corynebacterium diphtheriae (strain ATCC 700971 / NCTC 13129 / Biotype gravis) protein is tRNA-specific 2-thiouridylase MnmA.